A 424-amino-acid polypeptide reads, in one-letter code: Glutamate-1-semialdehyde 2,1-aminomutase (424 aa).

N6-(pyridoxal phosphate)lysine is present on Lys268.

The protein belongs to the class-III pyridoxal-phosphate-dependent aminotransferase family. HemL subfamily. Pyridoxal 5'-phosphate is required as a cofactor.

The protein resides in the cytoplasm. The enzyme catalyses (S)-4-amino-5-oxopentanoate = 5-aminolevulinate. Its pathway is porphyrin-containing compound metabolism; protoporphyrin-IX biosynthesis; 5-aminolevulinate from L-glutamyl-tRNA(Glu): step 2/2. The protein is Glutamate-1-semialdehyde 2,1-aminomutase of Methanosarcina acetivorans (strain ATCC 35395 / DSM 2834 / JCM 12185 / C2A).